We begin with the raw amino-acid sequence, 81 residues long: RBAK downstream neighbor protein (81 aa).

The first 22 residues, 1 to 22, serve as a signal peptide directing secretion; that stretch reads MWPPLLLLLLLLPAAPVPTAKA.

The protein resides in the secreted. The polypeptide is RBAK downstream neighbor protein (RBAKDN) (Homo sapiens (Human)).